Here is a 186-residue protein sequence, read N- to C-terminus: GTP cyclohydrolase 1 2 (186 aa).

Belongs to the GTP cyclohydrolase I family. In terms of assembly, homomer.

The enzyme catalyses GTP + H2O = 7,8-dihydroneopterin 3'-triphosphate + formate + H(+). Its pathway is cofactor biosynthesis; 7,8-dihydroneopterin triphosphate biosynthesis; 7,8-dihydroneopterin triphosphate from GTP: step 1/1. The sequence is that of GTP cyclohydrolase 1 2 from Pseudomonas putida (strain ATCC 47054 / DSM 6125 / CFBP 8728 / NCIMB 11950 / KT2440).